Consider the following 297-residue polypeptide: MATH domain and coiled-coil domain-containing protein At2g05420 (297 aa).

An MATH domain is found at 7-139; that stretch reads SKTITWVIEN…NGELTLVAKV (133 aa). Residues 239–281 are a coiled coil; sequence KLDWLEKKHGEIKEKKKKEEASLKRLQEMEKQIFNEAQIYKEK.

The protein is MATH domain and coiled-coil domain-containing protein At2g05420 of Arabidopsis thaliana (Mouse-ear cress).